The chain runs to 358 residues: tRNA-specific 2-thiouridylase MnmA (358 aa).

ATP-binding positions include 7-14 (AMSGGVDS) and Leu33. Residue Cys101 is the Nucleophile of the active site. Residues Cys101 and Cys197 are joined by a disulfide bond. Gly125 contributes to the ATP binding site. The interval 147–149 (KDQ) is interaction with tRNA. The active-site Cysteine persulfide intermediate is Cys197.

Belongs to the MnmA/TRMU family.

It is found in the cytoplasm. The catalysed reaction is S-sulfanyl-L-cysteinyl-[protein] + uridine(34) in tRNA + AH2 + ATP = 2-thiouridine(34) in tRNA + L-cysteinyl-[protein] + A + AMP + diphosphate + H(+). Functionally, catalyzes the 2-thiolation of uridine at the wobble position (U34) of tRNA, leading to the formation of s(2)U34. This Rickettsia typhi (strain ATCC VR-144 / Wilmington) protein is tRNA-specific 2-thiouridylase MnmA.